The following is a 34-amino-acid chain: Photosystem I reaction center subunit XII (34 aa).

The chain crosses the membrane as a helical span at residues 10–32 (VFVALVVAAHAAVLALRLSISLY).

Belongs to the PsaM family.

It localises to the cellular thylakoid membrane. This Parasynechococcus marenigrum (strain WH8102) protein is Photosystem I reaction center subunit XII.